Reading from the N-terminus, the 390-residue chain is Succinyl-diaminopimelate desuccinylase (390 aa).

His74 provides a ligand contact to Zn(2+). Residue Asp76 is part of the active site. Zn(2+) is bound at residue Asp107. Glu140 (proton acceptor) is an active-site residue. Residues Glu141, Glu169, and His363 each coordinate Zn(2+).

This sequence belongs to the peptidase M20A family. DapE subfamily. In terms of assembly, homodimer. Zn(2+) is required as a cofactor. It depends on Co(2+) as a cofactor.

It catalyses the reaction N-succinyl-(2S,6S)-2,6-diaminopimelate + H2O = (2S,6S)-2,6-diaminopimelate + succinate. It participates in amino-acid biosynthesis; L-lysine biosynthesis via DAP pathway; LL-2,6-diaminopimelate from (S)-tetrahydrodipicolinate (succinylase route): step 3/3. Catalyzes the hydrolysis of N-succinyl-L,L-diaminopimelic acid (SDAP), forming succinate and LL-2,6-diaminopimelate (DAP), an intermediate involved in the bacterial biosynthesis of lysine and meso-diaminopimelic acid, an essential component of bacterial cell walls. This is Succinyl-diaminopimelate desuccinylase from Bartonella quintana (strain Toulouse) (Rochalimaea quintana).